The sequence spans 92 residues: SPbeta prophage-derived uncharacterized protein YoqM (92 aa).

The signal sequence occupies residues 1 to 25; sequence MKLRKVLTGSVLSLGLLVSASPAFA.

The polypeptide is SPbeta prophage-derived uncharacterized protein YoqM (yoqM) (Bacillus subtilis (strain 168)).